Reading from the N-terminus, the 356-residue chain is Ferrochelatase (356 aa).

Fe cation contacts are provided by His214 and Glu295.

It belongs to the ferrochelatase family.

It is found in the cytoplasm. It catalyses the reaction heme b + 2 H(+) = protoporphyrin IX + Fe(2+). Its pathway is porphyrin-containing compound metabolism; protoheme biosynthesis; protoheme from protoporphyrin-IX: step 1/1. Its function is as follows. Catalyzes the ferrous insertion into protoporphyrin IX. In Paraburkholderia xenovorans (strain LB400), this protein is Ferrochelatase.